The primary structure comprises 181 residues: Bifunctional protein PyrR (181 aa).

Substrate is bound by residues 39–40 (RR), 104–112 (DDVLYTGRT), Arg-137, and Val-161. Positions 100–112 (VILVDDVLYTGRT) match the PRPP-binding motif.

The protein belongs to the purine/pyrimidine phosphoribosyltransferase family. PyrR subfamily.

The catalysed reaction is UMP + diphosphate = 5-phospho-alpha-D-ribose 1-diphosphate + uracil. Regulates the transcription of the pyrimidine nucleotide (pyr) operon in response to exogenous pyrimidines. Its function is as follows. Also displays a weak uracil phosphoribosyltransferase activity which is not physiologically significant. This Pasteurella multocida (strain Pm70) protein is Bifunctional protein PyrR.